The sequence spans 200 residues: Outer-membrane lipoprotein carrier protein (200 aa).

The first 18 residues, methionine 1–alanine 18, serve as a signal peptide directing secretion.

It belongs to the LolA family. As to quaternary structure, monomer.

It localises to the periplasm. In terms of biological role, participates in the translocation of lipoproteins from the inner membrane to the outer membrane. Only forms a complex with a lipoprotein if the residue after the N-terminal Cys is not an aspartate (The Asp acts as a targeting signal to indicate that the lipoprotein should stay in the inner membrane). This is Outer-membrane lipoprotein carrier protein from Photobacterium profundum (strain SS9).